We begin with the raw amino-acid sequence, 441 residues long: Diuretic hormone receptor (441 aa).

N-linked (GlcNAc...) asparagine glycosylation is found at asparagine 99, asparagine 107, and asparagine 112. A helical membrane pass occupies residues phenylalanine 135 to phenylalanine 158. The Cytoplasmic portion of the chain corresponds to lysine 159–asparagine 166. A helical transmembrane segment spans residues threonine 167 to alanine 187. Residues valine 188–glutamate 194 are Extracellular-facing. A helical membrane pass occupies residues asparagine 195 to leucine 224. Over phenylalanine 225–lysine 238 the chain is Cytoplasmic. A helical transmembrane segment spans residues leucine 239 to isoleucine 260. Residues lysine 261–tyrosine 291 lie on the Extracellular side of the membrane. The chain crosses the membrane as a helical span at residues phenylalanine 292 to methionine 315. Residues tryptophan 316–lysine 338 lie on the Cytoplasmic side of the membrane. Residues alanine 339 to glycine 357 form a helical membrane-spanning segment. The Extracellular segment spans residues proline 358–glutamine 371. Residues alanine 372–threonine 391 traverse the membrane as a helical segment. Residues glutamate 392–serine 441 are Cytoplasmic-facing.

The protein belongs to the G-protein coupled receptor 2 family. Expressed in Malpighian tubules.

It localises to the cell membrane. Functionally, receptor for the insect diurectic hormone. The activity of this receptor is mediated by G proteins which activate adenylyl cyclase. The polypeptide is Diuretic hormone receptor (Acheta domesticus (House cricket)).